Reading from the N-terminus, the 472-residue chain is SURF6 homolog gldi-11 (472 aa).

Disordered regions lie at residues 53–73 (LSKK…AKGL), 89–232 (KSKQ…SPEI), 249–350 (KVER…DRAL), and 414–472 (LVKK…GRIL). The segment covering 95 to 106 (KVQPQKVVAPVK) has biased composition (low complexity). The span at 107–132 (RPADQNKNKEKVVKKDQKKQDKKADS) shows a compositional bias: basic and acidic residues. Acidic residues predominate over residues 133–150 (DSEEDDSSDDEEKEETDE). The segment covering 151 to 160 (PVAKKQKKEE) has biased composition (basic and acidic residues). Composition is skewed to acidic residues over residues 161 to 175 (SSDD…EEPE) and 182 to 194 (EAED…EEEE). The span at 197–210 (SKPNKTVAQSTLKS) shows a compositional bias: polar residues. Residues 212 to 221 (GKIDKEIQKL) show a composition bias toward basic and acidic residues. Residues 274-285 (LKRRESKLKLKQ) are compositionally biased toward basic residues. Positions 286–305 (RRAEEKKGKEAAAQVKKETV) are enriched in basic and acidic residues. Over residues 414 to 426 (LVKKNKMKDRRKQ) the composition is skewed to basic residues. Residues 427-443 (KWENRENKTEGEKQTKQ) are compositionally biased toward basic and acidic residues. Positions 459–472 (KRKMNKLRNKGRIL) are enriched in basic residues.

It belongs to the SURF6 family.

It localises to the nucleus. The protein localises to the nucleoplasm. Functionally, binds to both DNA and RNA in vitro, with a stronger binding capacity for RNA. May represent a nucleolar constitutive protein involved in ribosomal biosynthesis or assembly. This chain is SURF6 homolog gldi-11, found in Caenorhabditis elegans.